The primary structure comprises 285 residues: MNKELEIIYQNIANQSELGQSSNYDDHYNPKRLYPIPRAPKRQEINLDPNSTTFYGFDCWNHYEVSWLNSKGKPVVAMAVISYDCHSPCIIESKSLKLYFNSLNNTTFPDVETVVQTISKDLSHCIGSEVAVNVYPLSEIASQTIYAAFDGICLDKLDIECSVYHVMPDFLSTSSELVEEVLYSDLLKSNCLVTNQPDWGSVQIIYKGKKINHEGLLKYLISFRNHNEFHEQCIERIFADIMRFCQPESLTVYGRYTRRGGLDINPIRSTEPCVFDGQNIRLIRQ.

91–93 (IES) serves as a coordination point for substrate. An NADPH-binding site is contributed by 93–94 (SK). The active-site Thioimide intermediate is the C191. D198 serves as the catalytic Proton donor. 230–231 (HE) is a binding site for substrate. 259 to 260 (RG) is a binding site for NADPH.

This sequence belongs to the GTP cyclohydrolase I family. QueF type 2 subfamily. Homodimer.

Its subcellular location is the cytoplasm. It catalyses the reaction 7-aminomethyl-7-carbaguanine + 2 NADP(+) = 7-cyano-7-deazaguanine + 2 NADPH + 3 H(+). It functions in the pathway tRNA modification; tRNA-queuosine biosynthesis. Functionally, catalyzes the NADPH-dependent reduction of 7-cyano-7-deazaguanine (preQ0) to 7-aminomethyl-7-deazaguanine (preQ1). The sequence is that of NADPH-dependent 7-cyano-7-deazaguanine reductase from Legionella pneumophila (strain Lens).